The sequence spans 255 residues: uncharacterized protein (255 aa).

In terms of domain architecture, HTH deoR-type spans Pro-3–Ser-58. Residues Val-20–Asp-39 constitute a DNA-binding region (H-T-H motif).

This is an uncharacterized protein from Escherichia coli (strain K12).